We begin with the raw amino-acid sequence, 420 residues long: Glucose-1-phosphate adenylyltransferase (420 aa).

Alpha-D-glucose 1-phosphate-binding positions include Tyr-107, Gly-173, 188–189 (EK), and Ser-206.

It belongs to the bacterial/plant glucose-1-phosphate adenylyltransferase family. As to quaternary structure, homotetramer.

It carries out the reaction alpha-D-glucose 1-phosphate + ATP + H(+) = ADP-alpha-D-glucose + diphosphate. It participates in glycan biosynthesis; glycogen biosynthesis. Functionally, involved in the biosynthesis of ADP-glucose, a building block required for the elongation reactions to produce glycogen. Catalyzes the reaction between ATP and alpha-D-glucose 1-phosphate (G1P) to produce pyrophosphate and ADP-Glc. In Shewanella oneidensis (strain ATCC 700550 / JCM 31522 / CIP 106686 / LMG 19005 / NCIMB 14063 / MR-1), this protein is Glucose-1-phosphate adenylyltransferase.